Consider the following 188-residue polypeptide: Ion-translocating oxidoreductase complex subunit B (188 aa).

Positions M1–A23 are hydrophobic. A 4Fe-4S domain is found at E29–V88. [4Fe-4S] cluster-binding residues include C46, C49, C54, C71, C113, C116, C119, C123, C143, C146, C149, and C153. 2 consecutive 4Fe-4S ferredoxin-type domains span residues S104–K133 and Q134–I163.

Belongs to the 4Fe4S bacterial-type ferredoxin family. RnfB subfamily. The complex is composed of six subunits: RnfA, RnfB, RnfC, RnfD, RnfE and RnfG. [4Fe-4S] cluster is required as a cofactor.

The protein localises to the cell inner membrane. Functionally, part of a membrane-bound complex that couples electron transfer with translocation of ions across the membrane. The polypeptide is Ion-translocating oxidoreductase complex subunit B (Thiobacillus denitrificans (strain ATCC 25259 / T1)).